A 383-amino-acid chain; its full sequence is tRNA-specific 2-thiouridylase MnmA (383 aa).

ATP-binding positions include 30-37 and methionine 56; that span reads GMSGGVDS. The segment at 116–118 is interaction with target base in tRNA; it reads NPD. Cysteine 121 (nucleophile) is an active-site residue. Cysteines 121 and 218 form a disulfide. Glycine 146 contributes to the ATP binding site. Residues 168-170 are interaction with tRNA; it reads KDQ. The Cysteine persulfide intermediate role is filled by cysteine 218. Positions 330–331 are interaction with tRNA; the sequence is RY.

This sequence belongs to the MnmA/TRMU family.

Its subcellular location is the cytoplasm. The catalysed reaction is S-sulfanyl-L-cysteinyl-[protein] + uridine(34) in tRNA + AH2 + ATP = 2-thiouridine(34) in tRNA + L-cysteinyl-[protein] + A + AMP + diphosphate + H(+). Functionally, catalyzes the 2-thiolation of uridine at the wobble position (U34) of tRNA, leading to the formation of s(2)U34. This is tRNA-specific 2-thiouridylase MnmA from Haemophilus influenzae (strain ATCC 51907 / DSM 11121 / KW20 / Rd).